The chain runs to 312 residues: Non-structural protein 12A (312 aa).

Positions 1 to 23 (MFKSGSGSLKRSGSISSVKSFSG) are enriched in low complexity. 3 disordered regions span residues 1–37 (MFKS…RGSV), 62–99 (FVPE…QNAD), and 111–161 (ESSK…GTGD). Residues 63–77 (VPEKTKSEGNLKDKS) are compositionally biased toward basic and acidic residues. A compositionally biased stretch (polar residues) spans 78–98 (SVITGNFGSSGPINAHTNQNA). The segment covering 122-134 (DARHTATDSRLSQ) has biased composition (basic and acidic residues).

This sequence belongs to the phytoreovirus non-structural protein Pns12A family.

The protein resides in the host cytoplasm. Constituent of viral factories. Binds to ssRNA and dsRNA. This chain is Non-structural protein 12A, found in Alopecurus aequalis (Barnyard grass).